The primary structure comprises 293 residues: MAEGRIIKALSGFYYVQSDNQQFVCKGRGLFRNKKITPLVGDYVEFEPKDDNEGYIMEIKERSNELVRPPIANIDQAIIVSSAVDPDFTTLLLDRFLVLIESKHIQPIILITKVDLLNEDQLENIKLYKQHYEKIGYRVELVSSKNQDLLPELEPYFDEKVSVFAGQSGVGKSSLINVLDPSLLLETAEISKSLGRGKHTTRHVELMKIGNGLVADTPGFSVLEFREIEAEELADSFPEFNARMHLCKFRGCMHDKEPKCAVKEAVENEEIAVFRYNHYLRFLEEIQTRKPRY.

In terms of domain architecture, CP-type G spans 63–223; the sequence is SNELVRPPIA…VADTPGFSVL (161 aa). Residues 112–115 and 166–174 contribute to the GTP site; these read TKVD and GQSGVGKSS. Zn(2+)-binding residues include C247, C252, H254, and C260.

This sequence belongs to the TRAFAC class YlqF/YawG GTPase family. RsgA subfamily. As to quaternary structure, monomer. Associates with 30S ribosomal subunit, binds 16S rRNA. Zn(2+) serves as cofactor.

The protein localises to the cytoplasm. Its function is as follows. One of several proteins that assist in the late maturation steps of the functional core of the 30S ribosomal subunit. Helps release RbfA from mature subunits. May play a role in the assembly of ribosomal proteins into the subunit. Circularly permuted GTPase that catalyzes slow GTP hydrolysis, GTPase activity is stimulated by the 30S ribosomal subunit. The sequence is that of Small ribosomal subunit biogenesis GTPase RsgA 2 from Oceanobacillus iheyensis (strain DSM 14371 / CIP 107618 / JCM 11309 / KCTC 3954 / HTE831).